A 269-amino-acid polypeptide reads, in one-letter code: Phosphate import ATP-binding protein PstB (269 aa).

Positions 14–253 (LTLEDVSISY…EFDSTKKIFS (240 aa)) constitute an ABC transporter domain. 46 to 53 (GPSGCGKS) is an ATP binding site.

It belongs to the ABC transporter superfamily. Phosphate importer (TC 3.A.1.7) family. As to quaternary structure, the complex is composed of two ATP-binding proteins (PstB), two transmembrane proteins (PstC and PstA) and a solute-binding protein (PstS).

Its subcellular location is the cell inner membrane. The enzyme catalyses phosphate(out) + ATP + H2O = ADP + 2 phosphate(in) + H(+). Part of the ABC transporter complex PstSACB involved in phosphate import. Responsible for energy coupling to the transport system. This Prochlorococcus marinus subsp. pastoris (strain CCMP1986 / NIES-2087 / MED4) protein is Phosphate import ATP-binding protein PstB.